The primary structure comprises 625 residues: Cysteine-rich receptor-like protein kinase 46 (625 aa).

Residues 1 to 23 form the signal peptide; sequence MASTLISSLAVVLPLTLLAPSMS. Residues 24–252 lie on the Extracellular side of the membrane; sequence MKISRIDVLG…LLAMSFTKEN (229 aa). Gnk2-homologous domains are found at residues 29 to 130 and 135 to 237; these read IDVL…NYSF and VSHQ…NYTF. Asn-38, Asn-127, Asn-234, and Asn-252 each carry an N-linked (GlcNAc...) asparagine glycan. Residues 253–273 form a helical membrane-spanning segment; that stretch reads LTYIFVISMVGVLAIAAGFWC. The Cytoplasmic portion of the chain corresponds to 274–625; it reads GKCFYMRTSP…TKPPFLHDSM (352 aa). The Protein kinase domain occupies 331 to 621; that stretch reads FNESCKLGVG…LPTPTKPPFL (291 aa). Residues 337-345 and Lys-359 each bind ATP; that span reads LGVGGYGEV. Tyr-404 is modified (phosphotyrosine). The Proton acceptor role is filled by Asp-454. The residue at position 458 (Ser-458) is a Phosphoserine. Thr-499 carries the post-translational modification Phosphothreonine. Phosphotyrosine is present on Tyr-507.

It belongs to the protein kinase superfamily. Ser/Thr protein kinase family. CRK subfamily.

It is found in the membrane. The enzyme catalyses L-seryl-[protein] + ATP = O-phospho-L-seryl-[protein] + ADP + H(+). It catalyses the reaction L-threonyl-[protein] + ATP = O-phospho-L-threonyl-[protein] + ADP + H(+). In Arabidopsis thaliana (Mouse-ear cress), this protein is Cysteine-rich receptor-like protein kinase 46.